We begin with the raw amino-acid sequence, 38 residues long: Very early lactation protein (38 aa).

Homodimer. O-glycosylated. Contains sialic acid residues. As to expression, found in the whey fraction of milk (at protein level).

Its subcellular location is the secreted. The protein is Very early lactation protein of Trichosurus vulpecula (Brush-tailed possum).